Reading from the N-terminus, the 243-residue chain is Ubiquinone/menaquinone biosynthesis C-methyltransferase UbiE (243 aa).

Residues threonine 69, aspartate 90, and 116-117 (DA) each bind S-adenosyl-L-methionine.

Belongs to the class I-like SAM-binding methyltransferase superfamily. MenG/UbiE family.

The enzyme catalyses a 2-demethylmenaquinol + S-adenosyl-L-methionine = a menaquinol + S-adenosyl-L-homocysteine + H(+). It carries out the reaction a 2-methoxy-6-(all-trans-polyprenyl)benzene-1,4-diol + S-adenosyl-L-methionine = a 5-methoxy-2-methyl-3-(all-trans-polyprenyl)benzene-1,4-diol + S-adenosyl-L-homocysteine + H(+). The protein operates within quinol/quinone metabolism; menaquinone biosynthesis; menaquinol from 1,4-dihydroxy-2-naphthoate: step 2/2. It functions in the pathway cofactor biosynthesis; ubiquinone biosynthesis. In terms of biological role, methyltransferase required for the conversion of demethylmenaquinol (DMKH2) to menaquinol (MKH2) and the conversion of 2-polyprenyl-6-methoxy-1,4-benzoquinol (DDMQH2) to 2-polyprenyl-3-methyl-6-methoxy-1,4-benzoquinol (DMQH2). This is Ubiquinone/menaquinone biosynthesis C-methyltransferase UbiE from Burkholderia vietnamiensis (strain G4 / LMG 22486) (Burkholderia cepacia (strain R1808)).